Reading from the N-terminus, the 207-residue chain is Outer-membrane lipoprotein carrier protein (207 aa).

The N-terminal stretch at 1–22 is a signal peptide; sequence MKLSEKFCVFLFFLLFTSTTHA.

The protein belongs to the LolA family. Monomer.

The protein resides in the periplasm. In terms of biological role, participates in the translocation of lipoproteins from the inner membrane to the outer membrane. Only forms a complex with a lipoprotein if the residue after the N-terminal Cys is not an aspartate (The Asp acts as a targeting signal to indicate that the lipoprotein should stay in the inner membrane). The protein is Outer-membrane lipoprotein carrier protein of Nitrosospira multiformis (strain ATCC 25196 / NCIMB 11849 / C 71).